Here is a 617-residue protein sequence, read N- to C-terminus: 5-hydroxytryptamine receptor 2B (617 aa).

At Met1–Val95 the chain is on the extracellular side. Asn31, Asn41, Asn51, and Asn58 each carry an N-linked (GlcNAc...) asparagine glycan. Residues Val96–Ile116 form a helical membrane-spanning segment. Residues Leu117–Leu128 are Cytoplasmic-facing. Residues Val129 to Val149 traverse the membrane as a helical segment. The Extracellular portion of the chain corresponds to Tyr150–Asp164. Residues Cys163 and Cys242 are joined by a disulfide bond. A helical transmembrane segment spans residues Ile165–Ala185. The Cytoplasmic portion of the chain corresponds to Ala186 to Arg205. The chain crosses the membrane as a helical span at residues Val206–Phe226. Over Gly227–Cys256 the chain is Extracellular. Residues Cys257–Ala277 traverse the membrane as a helical segment. The Cytoplasmic portion of the chain corresponds to Arg278 to Gln534. The segment at Arg309–Leu336 is disordered. Over residues Lys317–Val327 the composition is skewed to basic and acidic residues. The helical transmembrane segment at Thr535–Leu555 threads the bilayer. The Extracellular portion of the chain corresponds to Thr556–Ala570. The helical transmembrane segment at Ser571–Phe591 threads the bilayer. Over Asn592–Ile617 the chain is Cytoplasmic.

The protein belongs to the G-protein coupled receptor 1 family.

It localises to the cell membrane. Functionally, this is one of the several different receptors for 5-hydroxytryptamine (serotonin), a biogenic hormone that functions as a neurotransmitter, a hormone, and a mitogen. The activity of this receptor is mediated by G proteins which inhibit adenylate cyclase. This chain is 5-hydroxytryptamine receptor 2B (5-HT1B), found in Drosophila melanogaster (Fruit fly).